Consider the following 186-residue polypeptide: Tumor necrosis factor alpha-induced protein 8-like protein 1 (186 aa).

It belongs to the TNFAIP8 family. As to quaternary structure, interacts with FBXW5; TNFAIP8L1 competes with TSC2 to bind FBXW5 increasing TSC2 stability by preventing its ubiquitination.

It is found in the cytoplasm. Functionally, acts as a negative regulator of mTOR activity. This is Tumor necrosis factor alpha-induced protein 8-like protein 1 (TNFAIP8L1) from Bos taurus (Bovine).